A 527-amino-acid chain; its full sequence is Rhamnogalacturonate lyase A (527 aa).

A signal peptide spans 1 to 19; that stretch reads MLKASLLSFVAFTAQVAHA. Intrachain disulfides connect Cys49/Cys92 and Cys183/Cys192. N-linked (GlcNAc...) asparagine glycosylation is present at Asn350.

This sequence belongs to the polysaccharide lyase 4 family.

Its subcellular location is the secreted. It carries out the reaction Endotype eliminative cleavage of L-alpha-rhamnopyranosyl-(1-&gt;4)-alpha-D-galactopyranosyluronic acid bonds of rhamnogalacturonan I domains in ramified hairy regions of pectin leaving L-rhamnopyranose at the reducing end and 4-deoxy-4,5-unsaturated D-galactopyranosyluronic acid at the non-reducing end.. In terms of biological role, pectinolytic enzyme that has a positive effect in the apple hot-mash liquefaction process. This endolyase hydrolyzes the alpha-L-rhamnopyranosyl-(1,4)-alpha-D-galacturonopyranosyl glycosidic linkage by beta-elimination, thereby generating oligosaccharides terminating at the non-reducing end with a hex-4-enopyranosyluronic acid residue. This is Rhamnogalacturonate lyase A (rglA) from Aspergillus aculeatus.